We begin with the raw amino-acid sequence, 475 residues long: MSPKTETKASVGFKAGVKDYRLTYYTPEYQTKDTDILAAFRVTPQPGVPAEEAGAAVAAESSTGTWTTVWTDGLTSLDRYKGRCYDIEPVPGEENQFIAYVAYPLDLFEEGSVTNLFTSIVGNVFGFKALRALRLEDLRIPPAYSKTFQGPPHGIQVERDKLNKYGRPLLGCTIKPKLGLSAKNYGRAVYECLRGGLDFTKDDENVNSQPFMRWRDRFVFCAEAINKAQAETGEIKGHYLNATAGTCEEMMKRAVFARELGVPIVMHDYLTGGFTANTSLAHYCRDNGLLLHIHRAMHAVIDRQRNHGMHFRVLAKALRMSGGDHIHAGTVVGKLEGERDVTLGFVDLLRDDFIEKDRSRGIYFTQDWVSMPGVLPVASGGIHVWHMPALTEIFGDDSVLQFGGGTLGHPWGNAPGAVANRVALEACVQARNEGRDLAREGNEVIREACKWSPELAAACEIWKEIKFEFDVIDRL.

Positions 1–2 (MS) are excised as a propeptide. Residue proline 3 is modified to N-acetylproline. At lysine 14 the chain carries N6,N6,N6-trimethyllysine. Substrate contacts are provided by asparagine 123 and threonine 173. Lysine 175 serves as the catalytic Proton acceptor. Substrate is bound at residue lysine 177. Lysine 201, aspartate 203, and glutamate 204 together coordinate Mg(2+). N6-carboxylysine is present on lysine 201. The active-site Proton acceptor is the histidine 294. Substrate-binding residues include arginine 295, histidine 327, and serine 379.

The protein belongs to the RuBisCO large chain family. Type I subfamily. In terms of assembly, heterohexadecamer of 8 large chains and 8 small chains; disulfide-linked. The disulfide link is formed within the large subunit homodimers. Mg(2+) is required as a cofactor. Post-translationally, the disulfide bond which can form in the large chain dimeric partners within the hexadecamer appears to be associated with oxidative stress and protein turnover.

The protein resides in the plastid. It localises to the chloroplast. It catalyses the reaction 2 (2R)-3-phosphoglycerate + 2 H(+) = D-ribulose 1,5-bisphosphate + CO2 + H2O. It carries out the reaction D-ribulose 1,5-bisphosphate + O2 = 2-phosphoglycolate + (2R)-3-phosphoglycerate + 2 H(+). RuBisCO catalyzes two reactions: the carboxylation of D-ribulose 1,5-bisphosphate, the primary event in carbon dioxide fixation, as well as the oxidative fragmentation of the pentose substrate in the photorespiration process. Both reactions occur simultaneously and in competition at the same active site. This Pinus balfouriana (Foxtail pine) protein is Ribulose bisphosphate carboxylase large chain.